A 288-amino-acid polypeptide reads, in one-letter code: UTP--glucose-1-phosphate uridylyltransferase (288 aa).

It belongs to the UDPGP type 2 family.

The catalysed reaction is alpha-D-glucose 1-phosphate + UTP + H(+) = UDP-alpha-D-glucose + diphosphate. The protein operates within glycolipid metabolism; diglucosyl-diacylglycerol biosynthesis. Catalyzes the formation of UDP-glucose from glucose-1-phosphate and UTP. This is an intermediate step in the biosynthesis of diglucosyl-diacylglycerol (Glc2-DAG), i.e. a glycolipid found in the membrane, which is also used as a membrane anchor for lipoteichoic acid (LTA). This Staphylococcus epidermidis (strain ATCC 35984 / DSM 28319 / BCRC 17069 / CCUG 31568 / BM 3577 / RP62A) protein is UTP--glucose-1-phosphate uridylyltransferase (gtaB).